The chain runs to 249 residues: Coproheme decarboxylase (249 aa).

Residues Arg-131, 145–149 (YPMDK), His-172, and Gln-185 contribute to the Fe-coproporphyrin III site. Tyr-145 is an active-site residue.

Belongs to the ChdC family. Type 1 subfamily. Requires Fe-coproporphyrin III as cofactor.

It catalyses the reaction Fe-coproporphyrin III + 2 H2O2 + 2 H(+) = heme b + 2 CO2 + 4 H2O. The enzyme catalyses Fe-coproporphyrin III + H2O2 + H(+) = harderoheme III + CO2 + 2 H2O. It carries out the reaction harderoheme III + H2O2 + H(+) = heme b + CO2 + 2 H2O. The protein operates within porphyrin-containing compound metabolism; protoheme biosynthesis. Functionally, involved in coproporphyrin-dependent heme b biosynthesis. Catalyzes the decarboxylation of Fe-coproporphyrin III (coproheme) to heme b (protoheme IX), the last step of the pathway. The reaction occurs in a stepwise manner with a three-propionate intermediate. The polypeptide is Coproheme decarboxylase (Staphylococcus epidermidis (strain ATCC 35984 / DSM 28319 / BCRC 17069 / CCUG 31568 / BM 3577 / RP62A)).